Consider the following 392-residue polypeptide: Alpha-(1,3)-fucosyltransferase fut-6 (392 aa).

The Cytoplasmic segment spans residues 1-12 (MSQIGGATCTWR). Residues 13–35 (YLGRFVTLGIYASVALFVWYTLV) traverse the membrane as a helical; Signal-anchor for type II membrane protein segment. The Lumenal segment spans residues 36–392 (PTRSKHKDSI…CNNQIASKYL (357 aa)). A glycan (N-linked (GlcNAc...) asparagine) is linked at N158.

It belongs to the glycosyltransferase 10 family. Unlike other alpha-(1,3)-fucosyltransferases, appears not to require a divalent metal cation as cofactor. is required as a cofactor.

The protein resides in the golgi apparatus. It localises to the golgi stack membrane. Its pathway is protein modification; protein glycosylation. With respect to regulation, inhibited by divalent metal cations. In terms of biological role, involved in the fucosylation of N-glycans. Preferentially catalyzes the addition of fucose in alpha 1-3 linkage to the distal GlcNAc residue in N-glycans. Catalyzes the transfer of fucose to Gal-beta-1-4-GlcNAc-alpha-pNP (LN-pNP) and Gal-beta-1-4-GlcNAc-beta-1-3-Gal-beta-1-4-Glc (LNnT). Unlike alpha-(1,3)-fucosyltransferase fut-1, does not transfer fucose to Man-alpha-1-3-(Man-alpha-1-6)-Man-beta-1-4-GlcNAc-beta-1-4-GlcNAc-beta-1-Asn (M3), Man-alpha-1-3-(Man-alpha-1-6)-Man-beta-1-4-GlcNAc-beta-1-4-(Fuc-alpha-1-6)-GlcNAc-beta-1-Asn (M3F6) and GlcNAc-beta-1-2-Man-alpha-1-3-(GlcNAc-beta-1-2-Man-alpha-1-6)-Man-beta-1-4-GlcNAc-beta-1-4(Fuc-alpha-1-6)-GlcNAc-beta-1-Asn (GnM3F6). The sequence is that of Alpha-(1,3)-fucosyltransferase fut-6 from Caenorhabditis elegans.